Reading from the N-terminus, the 338-residue chain is Fructose-1,6-bisphosphatase 1 (338 aa).

A2 is modified (N-acetylalanine). AMP-binding positions include 18–22 and 28–32; these read VMEEG and TGELT. Residues D69 and E98 each coordinate Mg(2+). 113 to 114 is a binding site for AMP; the sequence is KY. The Mg(2+) site is built by D119, L121, and D122. Residue 122–125 coordinates substrate; it reads DGSS. Residue R141 participates in AMP binding. K151 carries the N6-succinyllysine modification. Residues 213–216, 244–249, Y265, and 275–277 contribute to the substrate site; these read NEGY, RYVGSM, and KLR. Y216, Y245, and Y265 each carry phosphotyrosine. Residue E281 coordinates Mg(2+).

It belongs to the FBPase class 1 family. In terms of assembly, homotetramer. Mg(2+) is required as a cofactor. In terms of tissue distribution, expressed in pancreatic islets.

It carries out the reaction beta-D-fructose 1,6-bisphosphate + H2O = beta-D-fructose 6-phosphate + phosphate. Its pathway is carbohydrate biosynthesis; gluconeogenesis. With respect to regulation, subject to complex allosteric regulation. The enzyme can assume an active R-state, or an inactive T-state. Intermediate conformations may exist. AMP acts as an allosteric inhibitor. AMP binding affects the turnover of bound substrate and not the affinity for substrate. Fructose 2,6-bisphosphate acts as a competitive inhibitor. Fructose 2,6-bisphosphate and AMP have synergistic effects. Catalyzes the hydrolysis of fructose 1,6-bisphosphate to fructose 6-phosphate in the presence of divalent cations, acting as a rate-limiting enzyme in gluconeogenesis. Plays a role in regulating glucose sensing and insulin secretion of pancreatic beta-cells. Appears to modulate glycerol gluconeogenesis in liver. Important regulator of appetite and adiposity; increased expression of the protein in liver after nutrient excess increases circulating satiety hormones and reduces appetite-stimulating neuropeptides and thus seems to provide a feedback mechanism to limit weight gain. This is Fructose-1,6-bisphosphatase 1 (FBP1) from Homo sapiens (Human).